A 443-amino-acid polypeptide reads, in one-letter code: Lysine-specific demethylase 8 (443 aa).

The segment covering 139 to 165 has biased composition (basic and acidic residues); it reads TKLEAERGVREPGLESSKLHSPGEHSN. Positions 139 to 174 are disordered; it reads TKLEAERGVREPGLESSKLHSPGEHSNKKSFASVTG. The 146-residue stretch at 298–443 folds into the JmjC domain; it reads GYLAQHQLFE…LSFSVSFWWS (146 aa). Residues His-348, Asp-350, and His-427 each contribute to the Fe cation site.

Fe(2+) serves as cofactor.

The protein resides in the nucleus. It catalyses the reaction N(6),N(6)-dimethyl-L-lysyl(36)-[histone H3] + 2 2-oxoglutarate + 2 O2 = L-lysyl(36)-[histone H3] + 2 formaldehyde + 2 succinate + 2 CO2. Histone demethylase required for G2/M phase cell cycle progression. Specifically demethylates dimethylated 'Lys-36' (H3K36me2) of histone H3, an epigenetic repressive mark, thereby acting as a transcription activator. May play a role in the regulation of the circadian clock. In Xenopus tropicalis (Western clawed frog), this protein is Lysine-specific demethylase 8 (kdm8).